The primary structure comprises 334 residues: tRNA uridine(34) hydroxylase (334 aa).

The Rhodanese domain maps to Ser-123–Ser-217. The Cysteine persulfide intermediate role is filled by Cys-177.

This sequence belongs to the TrhO family.

The catalysed reaction is uridine(34) in tRNA + AH2 + O2 = 5-hydroxyuridine(34) in tRNA + A + H2O. Functionally, catalyzes oxygen-dependent 5-hydroxyuridine (ho5U) modification at position 34 in tRNAs. The protein is tRNA uridine(34) hydroxylase of Shewanella baltica (strain OS223).